Reading from the N-terminus, the 328-residue chain is Peroxidase 63 (328 aa).

A signal peptide spans 1–27; the sequence is MAEQSQLKNLTIILLLLCLSFQSLSFA. 4 cysteine pairs are disulfide-bonded: Cys41–Cys122, Cys74–Cys79, Cys128–Cys324, and Cys207–Cys234. His72 serves as the catalytic Proton acceptor. Ca(2+) contacts are provided by Asp73, Gly78, Asp80, and Ser82. Pro170 is a binding site for substrate. Residue His200 coordinates heme b. Thr201 provides a ligand contact to Ca(2+). Asn217 and Asn218 each carry an N-linked (GlcNAc...) asparagine glycan. Ca(2+) contacts are provided by Asp248, Thr251, and Asp256.

The protein belongs to the peroxidase family. Classical plant (class III) peroxidase subfamily. Heme b serves as cofactor. It depends on Ca(2+) as a cofactor.

The protein resides in the secreted. The catalysed reaction is 2 a phenolic donor + H2O2 = 2 a phenolic radical donor + 2 H2O. Removal of H(2)O(2), oxidation of toxic reductants, biosynthesis and degradation of lignin, suberization, auxin catabolism, response to environmental stresses such as wounding, pathogen attack and oxidative stress. These functions might be dependent on each isozyme/isoform in each plant tissue. The chain is Peroxidase 63 (PER63) from Arabidopsis thaliana (Mouse-ear cress).